The sequence spans 158 residues: 3-hydroxyacyl-[acyl-carrier-protein] dehydratase FabZ (158 aa).

His-57 is an active-site residue.

This sequence belongs to the thioester dehydratase family. FabZ subfamily.

Its subcellular location is the cytoplasm. It catalyses the reaction a (3R)-hydroxyacyl-[ACP] = a (2E)-enoyl-[ACP] + H2O. Its function is as follows. Involved in unsaturated fatty acids biosynthesis. Catalyzes the dehydration of short chain beta-hydroxyacyl-ACPs and long chain saturated and unsaturated beta-hydroxyacyl-ACPs. In Anaeromyxobacter sp. (strain Fw109-5), this protein is 3-hydroxyacyl-[acyl-carrier-protein] dehydratase FabZ.